Here is a 550-residue protein sequence, read N- to C-terminus: Hydroxylamine reductase (550 aa).

4 residues coordinate [2Fe-2S] cluster: C3, C6, C18, and C25. Hybrid [4Fe-2O-2S] cluster contacts are provided by H249, E273, C317, C405, C433, C458, E492, and K494. C405 is subject to Cysteine persulfide.

The protein belongs to the HCP family. [2Fe-2S] cluster is required as a cofactor. Hybrid [4Fe-2O-2S] cluster serves as cofactor.

It is found in the cytoplasm. The enzyme catalyses A + NH4(+) + H2O = hydroxylamine + AH2 + H(+). Catalyzes the reduction of hydroxylamine to form NH(3) and H(2)O. This chain is Hydroxylamine reductase, found in Escherichia coli (strain SE11).